The sequence spans 125 residues: Phosphoribosyl-AMP cyclohydrolase (125 aa).

Residue aspartate 74 participates in Mg(2+) binding. Position 75 (cysteine 75) interacts with Zn(2+). Residues aspartate 76 and aspartate 78 each contribute to the Mg(2+) site. Residues cysteine 92 and cysteine 99 each coordinate Zn(2+).

This sequence belongs to the PRA-CH family. As to quaternary structure, homodimer. The cofactor is Mg(2+). Requires Zn(2+) as cofactor.

Its subcellular location is the cytoplasm. The enzyme catalyses 1-(5-phospho-beta-D-ribosyl)-5'-AMP + H2O = 1-(5-phospho-beta-D-ribosyl)-5-[(5-phospho-beta-D-ribosylamino)methylideneamino]imidazole-4-carboxamide. It functions in the pathway amino-acid biosynthesis; L-histidine biosynthesis; L-histidine from 5-phospho-alpha-D-ribose 1-diphosphate: step 3/9. Its function is as follows. Catalyzes the hydrolysis of the adenine ring of phosphoribosyl-AMP. The protein is Phosphoribosyl-AMP cyclohydrolase of Syntrophotalea carbinolica (strain DSM 2380 / NBRC 103641 / GraBd1) (Pelobacter carbinolicus).